Reading from the N-terminus, the 209-residue chain is MNSIKNHLMCEEIHKRFNLHPKVREAMESIEREVFVPAPFKHFAYTLNALSMQAQQYISSPLTVAKMTQYLEIDHVDSVLEIGCGSGYQAAVLSQIFRRVFSIERIESLYIEARLRLKTLGLDNVHVKFADGNKGWERYAPYDRILFSACAKNIPQALIDQLEEGGILVAPIQENNEQVIKRFVKQNNALRVQKVLEKCLFVPVVDGVQ.

Serine 59 is a catalytic residue.

Belongs to the methyltransferase superfamily. L-isoaspartyl/D-aspartyl protein methyltransferase family. As to quaternary structure, monomer.

The protein resides in the cytoplasm. It catalyses the reaction [protein]-L-isoaspartate + S-adenosyl-L-methionine = [protein]-L-isoaspartate alpha-methyl ester + S-adenosyl-L-homocysteine. Its function is as follows. Catalyzes the methyl esterification of L-isoaspartyl residues in peptides and proteins that result from spontaneous decomposition of normal L-aspartyl and L-asparaginyl residues. It plays a role in the repair and/or degradation of damaged proteins. The sequence is that of Protein-L-isoaspartate O-methyltransferase (pcm) from Helicobacter pylori (strain J99 / ATCC 700824) (Campylobacter pylori J99).